A 128-amino-acid polypeptide reads, in one-letter code: NHP2-like protein 1 (128 aa).

The residue at position 1 (methionine 1) is an N-acetylmethionine. At threonine 2 the chain carries N-acetylthreonine; in NHP2-like protein 1, N-terminally processed. Lysine 21 carries the post-translational modification N6-acetyllysine. The segment at arginine 36–arginine 48 is interaction with U4 snRNA and U4atac snRNA. An important for U4 snRNA-binding region spans residues serine 96–valine 128. Serine 122 is subject to Phosphoserine.

Belongs to the eukaryotic ribosomal protein eL8 family. In terms of assembly, identified in the spliceosome B complex. Component of the U4/U6-U5 tri-snRNP complex composed of the U4, U6 and U5 snRNAs and at least PRPF3, PRPF4, PRPF6, PRPF8, PRPF31, SNRNP200, TXNL4A, WDR57, SNRNP40, DDX23, CD2BP2, PPIH, NHP2L1, EFTUD2, SART1 and USP39. Interacts with RAD17 and PRPF31. The complex formed by SNU13 and PRPF31 binds U4 snRNA. The complex formed by SNU13 and PRPF31 also binds U4atac snRNA, a characteristic component of specific, less abundant spliceosomal complexes. Part of the small subunit (SSU) processome, composed of more than 70 proteins and the RNA chaperone small nucleolar RNA (snoRNA) U3. Core component of box C/D small nucleolar ribonucleoprotein (snoRNP) particles; the core proteins SNU13, NOP56, NOP58 and FBL or FBLL1 assemble stepwise onto the snoRNA.

It localises to the nucleus. Its subcellular location is the nucleolus. Functionally, part of the small subunit (SSU) processome, first precursor of the small eukaryotic ribosomal subunit. During the assembly of the SSU processome in the nucleolus, many ribosome biogenesis factors, an RNA chaperone and ribosomal proteins associate with the nascent pre-rRNA and work in concert to generate RNA folding, modifications, rearrangements and cleavage as well as targeted degradation of pre-ribosomal RNA by the RNA exosome. Involved in pre-mRNA splicing as component of the spliceosome. Binds to the 5'-stem-loop of U4 snRNA and thereby contributes to spliceosome assembly. The protein undergoes a conformational change upon RNA-binding. Core component of box C/D small nucleolar ribonucleoprotein (snoRNP) complexes that function in methylation of multiple sites on ribosomal RNAs (rRNAs) and messenger RNAs (mRNAs). This chain is NHP2-like protein 1, found in Bos taurus (Bovine).